We begin with the raw amino-acid sequence, 693 residues long: A disintegrin and metalloproteinase with thrombospondin motifs like (693 aa).

The first 24 residues, 1-24, serve as a signal peptide directing secretion; that stretch reads MESSVATHWLSAFVILCSFITTQS. Over residues 67-80 the composition is skewed to polar residues; sequence IPTSHPANSNSADS. A disordered region spans residues 67 to 91; the sequence is IPTSHPANSNSADSGKTPHLKTEKV. Residues Asn-124 and Asn-194 are each glycosylated (N-linked (GlcNAc...) asparagine). A Peptidase M12B domain is found at 353–585; sequence IYPEILVIVD…DTATCLYNSP (233 aa). 2 cysteine pairs are disulfide-bonded: Cys-485-Cys-580 and Cys-541-Cys-564. Zn(2+) is bound at residue His-514. Residues 514-525 carry the Metal-binding motif; it reads HEVGHLLGAVHD. Residue Glu-515 is part of the active site. Zn(2+) contacts are provided by His-518 and His-524. An N-linked (GlcNAc...) asparagine glycan is attached at Asn-687.

Zn(2+) is required as a cofactor.

It localises to the secreted. The protein resides in the extracellular space. Its subcellular location is the extracellular matrix. Involved in larval molting and metamorphosis. May degrade extracellular matrix (ECM) and basement membrane (BM) during the development of organs to allow degeneration and remodeling of tissues. The protein is A disintegrin and metalloproteinase with thrombospondin motifs like of Bombyx mori (Silk moth).